We begin with the raw amino-acid sequence, 645 residues long: MDDIADRMRMDAGEVTLVNHNSVFKTHLLPQTGFPEDQLSLSDQQILSSRQGYLDRSFTCSTRSAAYNPSYYSDNPSSDSFLGSGDLRTFGQSANGQWRNSTPSSSSSLQKSRNSRSLYLETRKTSSGLSNIFAGKSNHHCHVSAYEKSFPIKPVPSPSWSGSCRRSLLSPKKTQRRHVSTAEETVQEEEREIYRQLLQMVTGKQFTIAKPTTHFPLHLSRCLSSSKNTLKDSLFKNGNSCASQIIGSDTSSSGSASILTNQEQLSHSVYSLSSYTPDVVAFGSKDSGTLHHPHHHHSVPHQPDNLAASNTQSEGSDSVILLKVKDSQTPTPSSTFFQAELWIKELTSVYDSRARERLRQIEEQKALALQLQNQRLQEREHSVHDSVELHLRVPLEKEIPVTVAQETQKKGHKLTDSEDEFPEITEEMEKEIKNVFRNGNQDEVLSEAFRLTITRKDIQTLNHLNWLNDEIINFYMNMLMERSKEKGLPSVHAFNTFFFTKLKTAGYQAVKRWTKKVDVFSVDILLVPIHLGVHWCLAVVDFRKKNITYYDSMGGINNEACRILLQYLKQESIDKKRKEFDTNGWQLFSKKSQEIPQQMNGSDCGMFACKYADCITKDRPINFTQQHMPYFRKRMVWEILHRKLL.

The segment at 1 to 200 (MDDIADRMRM…REIYRQLLQM (200 aa)) is interaction with CCAR2. Phosphoserine occurs at positions 57, 117, and 157. Positions 92 to 117 (QSANGQWRNSTPSSSSSLQKSRNSRS) are disordered. Low complexity predominate over residues 99 to 117 (RNSTPSSSSSLQKSRNSRS). The Nuclear localization signal signature appears at 171-177 (PKKTQRR). The tract at residues 285 to 313 (KDSGTLHHPHHHHSVPHQPDNLAASNTQS) is disordered. 2 protease regions span residues 451–614 (LTIT…YADC) and 451–615 (LTIT…ADCI). Residues histidine 534 and aspartate 551 contribute to the active site. Residues 575–578 (KKRK) carry the Nuclear localization signal motif. The Nucleophile role is filled by cysteine 604. The Nuclear localization signal motif lies at 629-635 (PYFRKRM). Positions 636 to 645 (VWEILHRKLL) match the Nuclear export signal motif.

Belongs to the peptidase C48 family. Interacts with RBM33; promoting ALKBH5 desumoylation and subsequent activation.

Its subcellular location is the nucleus. The protein resides in the cytoplasm. Functionally, protease that catalyzes two essential functions in the SUMO pathway. The first is the hydrolysis of an alpha-linked peptide bond at the C-terminal end of the small ubiquitin-like modifier (SUMO) propeptides, SUMO1, SUMO2 and SUMO3 leading to the mature form of the proteins. The second is the deconjugation of SUMO1, SUMO2 and SUMO3 from targeted proteins, by cleaving an epsilon-linked peptide bond between the C-terminal glycine of the mature SUMO and the lysine epsilon-amino group of the target protein. Deconjugates SUMO1 from HIPK2. Deconjugates SUMO1 from HDAC1 and BHLHE40/DEC1, which decreases its transcriptional repression activity. Deconjugates SUMO1 from CLOCK, which decreases its transcriptional activation activity. Deconjugates SUMO2 from MTA1. Inhibits N(6)-methyladenosine (m6A) RNA methylation by mediating SUMO1 deconjugation from METTL3 and ALKBH5: METTL3 inhibits the m6A RNA methyltransferase activity, while ALKBH5 desumoylation promotes m6A demethylation. Desumoylates CCAR2 which decreases its interaction with SIRT1. Deconjugates SUMO1 from GPS2. In Pongo abelii (Sumatran orangutan), this protein is Sentrin-specific protease 1 (SENP1).